Consider the following 597-residue polypeptide: Arginine--tRNA ligase (597 aa).

The 'HIGH' region motif lies at 138 to 148 (ANPTGPMHVGH).

Belongs to the class-I aminoacyl-tRNA synthetase family. In terms of assembly, monomer.

It is found in the cytoplasm. The enzyme catalyses tRNA(Arg) + L-arginine + ATP = L-arginyl-tRNA(Arg) + AMP + diphosphate. This is Arginine--tRNA ligase from Nitrobacter hamburgensis (strain DSM 10229 / NCIMB 13809 / X14).